A 248-amino-acid chain; its full sequence is Trypsin I-P1 (248 aa).

The first 15 residues, 1-15 (MKFLVLVAFVGVTVA), serve as a signal peptide directing secretion. Residues 16 to 25 (FPISDEDDDK) constitute a propeptide, activation peptide. The 221-residue stretch at 26–246 (IVGGYSCARS…YVSWIKTTMS (221 aa)) folds into the Peptidase S1 domain. Disulfide bonds link Cys-32–Cys-162, Cys-50–Cys-66, Cys-134–Cys-235, Cys-141–Cys-208, Cys-173–Cys-187, and Cys-198–Cys-222. Residue His-65 is the Charge relay system of the active site. Glu-77, Asn-79, and Glu-87 together coordinate Ca(2+). The Charge relay system role is filled by Asp-109. Ser-202 (charge relay system) is an active-site residue.

Belongs to the peptidase S1 family. Requires Ca(2+) as cofactor. In terms of tissue distribution, high levels are seen in the pancreas while lower levels are found in the liver, spleen and thymus.

The protein resides in the secreted. Its subcellular location is the extracellular space. It carries out the reaction Preferential cleavage: Arg-|-Xaa, Lys-|-Xaa.. The sequence is that of Trypsin I-P1 from Gallus gallus (Chicken).